Reading from the N-terminus, the 345-residue chain is MPITPQQALQRTIEHREIFHDEMVDLMRQIMRGEVSDAMVSAILTGLRVKKETIGEIAGAATVMREFSRRVEVTDRRHMVDIVGTGGDGSHTFNISTCAMFVAAAGGAKVAKHGNRSVSSKSGSADALEALGAVIELQPEQVAASLAQTGIGFMYAPVHHPAMKVVAPVRREMGVRTIFNILGPLTNPAGSPNILMGVFHPDLVGIQARVLQELGAERALVVWGRDGMDELSLGAGTLVGELRDGQVHEYEVHPEDFGIAMSASRNLKVADAAESRAMLLQVLDNVPGPALDIVALNAGAALYVAGVADSIADGIVRARQVLADGSARACLDAYVAFTQQATAQG.

5-phospho-alpha-D-ribose 1-diphosphate contacts are provided by residues Gly-84, 87–88, Thr-92, 94–97, 112–120, and Ser-124; these read GD, NIST, and KHGNRSVSS. Residue Gly-84 participates in anthranilate binding. Residue Ser-96 coordinates Mg(2+). Asn-115 contacts anthranilate. Arg-170 is an anthranilate binding site. Asp-229 and Glu-230 together coordinate Mg(2+).

It belongs to the anthranilate phosphoribosyltransferase family. In terms of assembly, homodimer. Mg(2+) serves as cofactor.

The catalysed reaction is N-(5-phospho-beta-D-ribosyl)anthranilate + diphosphate = 5-phospho-alpha-D-ribose 1-diphosphate + anthranilate. Its pathway is amino-acid biosynthesis; L-tryptophan biosynthesis; L-tryptophan from chorismate: step 2/5. In terms of biological role, catalyzes the transfer of the phosphoribosyl group of 5-phosphorylribose-1-pyrophosphate (PRPP) to anthranilate to yield N-(5'-phosphoribosyl)-anthranilate (PRA). The sequence is that of Anthranilate phosphoribosyltransferase from Xanthomonas campestris pv. campestris (strain 8004).